The sequence spans 563 residues: Rhodopsin kinase GRK1 (563 aa).

The interval 1–15 is interaction with RCVRN; sequence MDFGSLETVVANSAF. The tract at residues 1 to 189 is N-terminal; that stretch reads MDFGSLETVV…LEAQPMGEDW (189 aa). Serine 5 is subject to Phosphoserine. At threonine 8 the chain carries Phosphothreonine. Serine 21 carries the post-translational modification Phosphoserine; by PKA and autocatalysis. Residues 58–175 enclose the RGS domain; that stretch reads FESVCLEQPI…LGSLYFLRFL (118 aa). The Protein kinase domain maps to 190–455; that stretch reads FLDFRVLGKG…CDKLRAHPLF (266 aa). Residues 196–204 and lysine 219 each bind ATP; that span reads LGKGGFGEV. Aspartate 317 acts as the Proton acceptor in catalysis. One can recognise an AGC-kinase C-terminal domain in the interval 456-521; the sequence is KDLNWRQLEA…GNCPIPWQEE (66 aa). The segment at 456–563 is C-terminal; that stretch reads KDLNWRQLEA…SSKSGMCLVS (108 aa). Phosphoserine; by autocatalysis is present on serine 491. Threonine 492 is subject to Phosphothreonine; by autocatalysis. Residues 539–563 are disordered; the sequence is QMPDDMKGISGGSSSSSKSGMCLVS. The segment covering 550–563 has biased composition (low complexity); it reads GSSSSSKSGMCLVS. At cysteine 560 the chain carries Cysteine methyl ester. Cysteine 560 carries S-farnesyl cysteine lipidation. A propeptide spans 561 to 563 (removed in mature form); sequence LVS.

This sequence belongs to the protein kinase superfamily. AGC Ser/Thr protein kinase family. GPRK subfamily. As to quaternary structure, interacts (via N-terminus) with RCVRN (via C-terminus); the interaction is Ca(2+)-dependent. Interacts (when prenylated) with PDE6D; this promotes release from membranes. May form a complex composed of RHO, GRK1 and RCVRN in a Ca(2+)-dependent manner; RCVRN prevents the interaction between GRK1 and RHO. Post-translationally, autophosphorylated, Ser-21 is a minor site of autophosphorylation compared to Ser-491 and Thr-492. Phosphorylation at Ser-21 is regulated by light and activated by cAMP. Farnesylation is required for full activity. In terms of tissue distribution, retinal-specific. Expressed in rods and cones cells.

The protein localises to the membrane. The protein resides in the cell projection. It localises to the cilium. Its subcellular location is the photoreceptor outer segment. The catalysed reaction is L-threonyl-[rhodopsin] + ATP = O-phospho-L-threonyl-[rhodopsin] + ADP + H(+). It carries out the reaction L-seryl-[rhodopsin] + ATP = O-phospho-L-seryl-[rhodopsin] + ADP + H(+). With respect to regulation, inhibited by RCVRN, which prevents the interaction between GRK1 and RHO. Inhibition is calcium-dependent. Inhibited by phosphorylation of Ser-21. Its function is as follows. Retina-specific kinase involved in the signal turnoff via phosphorylation of rhodopsin (RHO), the G protein- coupled receptor that initiates the phototransduction cascade. This rapid desensitization is essential for scotopic vision and permits rapid adaptation to changes in illumination. May play a role in the maintenance of the outer nuclear layer in the retina. The chain is Rhodopsin kinase GRK1 from Homo sapiens (Human).